The primary structure comprises 102 residues: MQGQTIRIRLKAFDYRVLDASTQEIVNTAKRTGAQVRGPIPLPNKIEKFTVLRGPHIDKKSRDQWEIRTHKRLLDIVDPTPQTVDALMKLDLAAGVDIQIKV.

It belongs to the universal ribosomal protein uS10 family. As to quaternary structure, part of the 30S ribosomal subunit.

In terms of biological role, involved in the binding of tRNA to the ribosomes. The polypeptide is Small ribosomal subunit protein uS10 (Cereibacter sphaeroides (strain ATCC 17029 / ATH 2.4.9) (Rhodobacter sphaeroides)).